Reading from the N-terminus, the 330-residue chain is Protein TIFY 11f (330 aa).

The Tify 1 domain maps to 61-97 (EAAAAAQLKIMYGGRMLVFDDFFPAGGAVVELVRAAA). A Jas motif is present at residues 124–142 (PVVRKVSLQRFVEKRRRMR). A Nuclear localization signal motif is present at residues 126-133 (VRKVSLQR). One can recognise a Tify 2 domain in the interval 228-264 (EAAAAAQLKIMYGGRMLVFDDFFPAGGAVVELVRAAA). Positions 267-330 (GRDDDGARAR…SGRTDDAAFY (64 aa)) are disordered.

This sequence belongs to the TIFY/JAZ family. Post-translationally, ubiquitinated. Targeted for degradation by the SCF(COI1) E3 ubiquitin ligase-proteasome pathway during jasmonate signaling.

It localises to the nucleus. Functionally, repressor of jasmonate responses. This Oryza sativa subsp. japonica (Rice) protein is Protein TIFY 11f.